The following is a 179-amino-acid chain: Shikimate kinase (179 aa).

15–20 provides a ligand contact to ATP; that stretch reads GAGKTS. Position 19 (threonine 19) interacts with Mg(2+). Substrate is bound by residues aspartate 37, arginine 61, and glycine 83. Arginine 123 serves as a coordination point for ATP. Arginine 142 contacts substrate.

Belongs to the shikimate kinase family. Monomer. Requires Mg(2+) as cofactor.

The protein localises to the cytoplasm. The catalysed reaction is shikimate + ATP = 3-phosphoshikimate + ADP + H(+). Its pathway is metabolic intermediate biosynthesis; chorismate biosynthesis; chorismate from D-erythrose 4-phosphate and phosphoenolpyruvate: step 5/7. Its function is as follows. Catalyzes the specific phosphorylation of the 3-hydroxyl group of shikimic acid using ATP as a cosubstrate. This is Shikimate kinase from Coxiella burnetii (strain CbuG_Q212) (Coxiella burnetii (strain Q212)).